A 484-amino-acid polypeptide reads, in one-letter code: ATP-dependent rRNA helicase RRP3 (484 aa).

Over residues 1–10 (MAIVGSNSVS) the composition is skewed to polar residues. The segment at 1 to 61 (MAIVGSNSVS…SSQKSKNIVE (61 aa)) is disordered. A compositionally biased stretch (basic and acidic residues) spans 18 to 54 (RNDARDLAEKIKRNALKKQEQDKKQQLEEESKPESSQ). Positions 71-99 (STFSELKLVPELLEAIQQMKFSKPTPIQS) match the Q motif motif. The Helicase ATP-binding domain occupies 102 to 273 (IPHALEGKDI…RASLHNPVRV (172 aa)). An ATP-binding site is contributed by 115–122 (AQTGSGKT). A DEAD box motif is present at residues 221 to 224 (DEAD). The Helicase C-terminal domain maps to 300–444 (YLIHLLNEFV…KDPSPPKAML (145 aa)). The disordered stretch occupies residues 460 to 484 (RQTKEFHEKTRRGRRGKDDKDREEH). The span at 475–484 (GKDDKDREEH) shows a compositional bias: basic and acidic residues.

Belongs to the DEAD box helicase family. DDX47/RRP3 subfamily. Interacts with the SSU processome.

Its subcellular location is the nucleus. The enzyme catalyses ATP + H2O = ADP + phosphate + H(+). ATP-dependent rRNA helicase required for pre-ribosomal RNA processing. Involved in the maturation of the 35S-pre-rRNA and to its cleavage to mature 18S rRNA. The protein is ATP-dependent rRNA helicase RRP3 of Scheffersomyces stipitis (strain ATCC 58785 / CBS 6054 / NBRC 10063 / NRRL Y-11545) (Yeast).